The sequence spans 405 residues: Solute carrier family 35 member E2B (405 aa).

The interval 1–28 is disordered; sequence MSSSVKTPALEELVPGSEEKPKGRSPLS. The next 10 membrane-spanning stretches (helical) occupy residues 81 to 101, 106 to 126, 142 to 162, 167 to 187, 195 to 215, 219 to 241, 264 to 284, 296 to 316, 326 to 346, and 347 to 367; these read LWFF…SLLG, MLGA…TLVP, FLMT…LGLV, VAVS…VIMS, TGLL…LCTA, SFNV…QNVF, AAAV…PVIG, VVLL…TAYA, FSVA…IVFG, and NKIT…VLLY. A disordered region spans residues 380 to 405; sequence SLAAATGRAPDDTVEPLLPQDPRQHP.

This sequence belongs to the TPT transporter family. SLC35E subfamily.

It localises to the membrane. Putative transporter. In Homo sapiens (Human), this protein is Solute carrier family 35 member E2B (SLC35E2B).